A 386-amino-acid chain; its full sequence is N-acetylneuraminate epimerase (386 aa).

Positions 1–29 (MGMQMKNSKKMMTLMALCLSVAITTSGYA) are cleaved as a signal peptide. Kelch repeat units follow at residues 51-95 (VIYV…VFLN), 97-149 (ELYV…VKLN), 151-186 (TMAL…RVIY), 187-232 (NYFN…AMEN), 235-284 (LTLI…LAGA), 306-355 (QNYT…NYGD), and 357-386 (IFLI…LLIE). Residue E241 is the Proton acceptor of the active site.

It belongs to the NanM family. As to quaternary structure, homodimer.

It is found in the periplasm. It catalyses the reaction N-acetyl-alpha-neuraminate = N-acetyl-beta-neuraminate. Functionally, converts alpha-N-acetylneuranimic acid (Neu5Ac) to the beta-anomer, accelerating the equilibrium between the alpha- and beta-anomers. Probably facilitates sialidase-negative bacteria to compete successfully for limited amounts of extracellular Neu5Ac, which is likely taken up in the beta-anomer. In addition, the rapid removal of sialic acid from solution might be advantageous to the bacterium to damp down host responses. The sequence is that of N-acetylneuraminate epimerase from Salmonella arizonae (strain ATCC BAA-731 / CDC346-86 / RSK2980).